Reading from the N-terminus, the 201-residue chain is FMN-dependent NADH:quinone oxidoreductase (201 aa).

Residues Ser9 and 16–18 (SYS) contribute to the FMN site.

The protein belongs to the azoreductase type 1 family. In terms of assembly, homodimer. FMN is required as a cofactor.

It carries out the reaction 2 a quinone + NADH + H(+) = 2 a 1,4-benzosemiquinone + NAD(+). The catalysed reaction is N,N-dimethyl-1,4-phenylenediamine + anthranilate + 2 NAD(+) = 2-(4-dimethylaminophenyl)diazenylbenzoate + 2 NADH + 2 H(+). Its function is as follows. Quinone reductase that provides resistance to thiol-specific stress caused by electrophilic quinones. In terms of biological role, also exhibits azoreductase activity. Catalyzes the reductive cleavage of the azo bond in aromatic azo compounds to the corresponding amines. The chain is FMN-dependent NADH:quinone oxidoreductase from Mesomycoplasma hyopneumoniae (strain 232) (Mycoplasma hyopneumoniae).